A 775-amino-acid chain; its full sequence is Glutamine--tRNA ligase (775 aa).

The residue at position 2 (alanine 2) is an N-acetylalanine. Serine 70 bears the Phosphoserine mark. ATP is bound by residues glutamate 271–asparagine 273 and histidine 277–alanine 283. Aspartate 303 is an L-glutamine binding site. Residue lysine 309 is modified to N6-acetyllysine. Tyrosine 438 lines the L-glutamine pocket. ATP-binding positions include threonine 457, arginine 486–leucine 487, and valine 494–lysine 496. Serine 495 is modified (phosphoserine).

This sequence belongs to the class-I aminoacyl-tRNA synthetase family. In terms of assembly, monomer. Part of a multisubunit complex that groups tRNA ligases for Arg (RARS1), Asp (DARS1), Gln (QARS1), Ile (IARS1), Leu (LARS1), Lys (KARS1), Met (MARS1) the bifunctional ligase for Glu and Pro (EPRS1) and the auxiliary subunits AIMP1/p43, AIMP2/p38 and EEF1E1/p18. Interacts with RARS1. Part of a complex composed of RARS1, QARS1 and AIMP1.

Its subcellular location is the cytoplasm. It is found in the cytosol. It catalyses the reaction tRNA(Gln) + L-glutamine + ATP = L-glutaminyl-tRNA(Gln) + AMP + diphosphate. In terms of biological role, glutamine--tRNA ligase. Plays a critical role in brain development. This chain is Glutamine--tRNA ligase (Qars1), found in Mus musculus (Mouse).